The following is a 578-amino-acid chain: Zinc finger protein with KRAB and SCAN domains 8 (578 aa).

The interval 1–20 (MAEESRKPSAPSPPDQTPEE) is disordered. Serine 12 is modified (phosphoserine). A Glycyl lysine isopeptide (Lys-Gly) (interchain with G-Cter in SUMO2) cross-link involves residue lysine 26. The 83-residue stretch at 51–133 (RLRFRQLCYQ…TLLEDLERQI (83 aa)) folds into the SCAN box domain. The tract at residues 158–205 (ASAPEPPNTQLQSEATQHKSPVPQESQERAMSTSQSPTRSQKGSSGDQ) is disordered. The segment covering 165–205 (NTQLQSEATQHKSPVPQESQERAMSTSQSPTRSQKGSSGDQ) has biased composition (polar residues). Residues lysine 176 and lysine 199 each participate in a glycyl lysine isopeptide (Lys-Gly) (interchain with G-Cter in SUMO2) cross-link. A Phosphoserine modification is found at serine 201. In terms of domain architecture, KRAB spans 220-316 (EKIEDMAVSL…GRLERQRGNP (97 aa)). Glycyl lysine isopeptide (Lys-Gly) (interchain with G-Cter in SUMO2) cross-links involve residues lysine 221, lysine 272, and lysine 288. 2 consecutive C2H2-type zinc fingers follow at residues 322–344 (HKCDECGKSFAQSSGLVRHWRIH) and 350–372 (YQCNVCGKAFSYRSALLSHQDIH). Residues lysine 374 and lysine 376 each participate in a glycyl lysine isopeptide (Lys-Gly) (interchain with G-Cter in SUMO2) cross-link. C2H2-type zinc fingers lie at residues 378-400 (YHCKECGKAFSQNTGLILHQRIH), 406-428 (YQCNQCGKAFSQSAGLILHQRIH), 434-456 (YECNECGKAFSHSSHLIGHQRIH), 462-484 (YECDECGKTFRRSSHLIGHQRSH), 490-512 (YKCNECGRAFSQKSGLIEHQRIH), 518-540 (YKCKECGKAFNGNTGLIQHLRIH), and 546-568 (YQCNECGKAFIQRSSLIRHQRIH). Glycyl lysine isopeptide (Lys-Gly) (interchain with G-Cter in SUMO2) cross-links involve residues lysine 413 and lysine 441. Lysine 502 is covalently cross-linked (Glycyl lysine isopeptide (Lys-Gly) (interchain with G-Cter in SUMO2)). A Glycyl lysine isopeptide (Lys-Gly) (interchain with G-Cter in SUMO2) cross-link involves residue lysine 572.

The protein belongs to the krueppel C2H2-type zinc-finger protein family.

It is found in the nucleus. In terms of biological role, may be involved in transcriptional regulation. In Pan troglodytes (Chimpanzee), this protein is Zinc finger protein with KRAB and SCAN domains 8 (ZKSCAN8).